Consider the following 315-residue polypeptide: MTQEFEHLSVLLAETVAGLNIRPDGIYIDGTFGRGGHSRKVLEELGPNGRLIAIDRDPQAIAAAEQFKDDSRFQIVHGGFGQLADYVEDLGLKGQIDGVLLDFGVSSPQLDDAERGFSFLRDGPLDMRMDNSQGETAAQWLARAEIEDMAWVFKTYGEEKNSRHIARCIAADREKAPFLRTKDLADLIARITKNKERNKHPATRVFQAIRIYINSELEQIDQALEGALAVLAPEGRLSVISFHSLEDRMVKRFIRRNSQGESVPHGLPITEAEINKSRKLKAMGKAIKPSVEEVERNARARSSVLRIAERLPYEA.

S-adenosyl-L-methionine is bound by residues 35-37 (GGH), Asp55, Phe80, Asp102, and Gln109.

The protein belongs to the methyltransferase superfamily. RsmH family.

The protein localises to the cytoplasm. It carries out the reaction cytidine(1402) in 16S rRNA + S-adenosyl-L-methionine = N(4)-methylcytidine(1402) in 16S rRNA + S-adenosyl-L-homocysteine + H(+). Its function is as follows. Specifically methylates the N4 position of cytidine in position 1402 (C1402) of 16S rRNA. The chain is Ribosomal RNA small subunit methyltransferase H from Shewanella pealeana (strain ATCC 700345 / ANG-SQ1).